A 74-amino-acid chain; its full sequence is Serine rich endogenous peptide 23 (74 aa).

A signal peptide spans 1–25; that stretch reads MNKVVVYVLALSILLFFGLPNTTLA. The short motif at 52 to 66 is the SCOOP motif element; it reads KIAVGGSDSVRAHSK. Positions 58–60 match the SxS motif essential for MIK2 binding motif; sequence SDS.

The protein belongs to the serine rich endogenous peptide (SCOOP) phytocytokine family. Interacts with MIK2 (via extracellular leucine-rich repeat domain); this interaction triggers the formation of complex between MIK2 and the BAK1/SERK3 and SERK4 coreceptors, and subsequent BAK1 activation by phosphorylation. Mostly expressed in roots, and, to a lower extent, in seedlings shoots.

Its subcellular location is the cell membrane. The protein resides in the secreted. It localises to the extracellular space. It is found in the apoplast. In terms of biological role, brassicaceae-specific phytocytokine (plant endogenous peptide released into the apoplast) perceived by MIK2 in a BAK1/SERK3 and SERK4 coreceptors-dependent manner, that modulates various physiological and antimicrobial processes including growth prevention and reactive oxygen species (ROS) response regulation. Inhibits root growth. The protein is Serine rich endogenous peptide 23 of Arabidopsis thaliana (Mouse-ear cress).